The sequence spans 668 residues: Potassium voltage-gated channel subfamily KQT member 1 (668 aa).

The Cytoplasmic portion of the chain corresponds to 1–119 (MDTASSPPSA…YNFLERPTGW (119 aa)). The residue at position 27 (Ser27) is a Phosphoserine; by PKA. A helical membrane pass occupies residues 120 to 141 (KCFVYHFTVFLIVLVCLIFSVL). The Extracellular portion of the chain corresponds to 142–152 (STIEQYAALAT). The helical transmembrane segment at 153–175 (GTLFWMEIVLVVFFGTEYVVRLW) threads the bilayer. Residues 176–191 (SAGCRSKYVGIWGRLR) lie on the Cytoplasmic side of the membrane. A helical membrane pass occupies residues 192–217 (FARKPISIIDLIVVVASMVVLCVGSK). Over 218-225 (GQVFATSA) the chain is Extracellular. A helical; Voltage-sensor membrane pass occupies residues 226–241 (IRGIRFLQILRMLHVD). The interaction with KCNE3 stretch occupies residues 237-245 (MLHVDRQGG). The Cytoplasmic segment spans residues 242 to 259 (RQGGTWRLLGSVVFIHRQ). Gln243 contacts a 1,2-diacyl-sn-glycero-3-phospho-(1D-myo-inositol-4,5-bisphosphate). Residues 260–282 (ELITTLYIGFLGLIFSSYFVYLA) traverse the membrane as a helical segment. The Extracellular portion of the chain corresponds to 283-298 (EKDAVNESGRIEFGSY). An N-linked (GlcNAc...) asparagine glycan is attached at Asn288. The segment at residues 299–319 (ADALWWGVVTVTTIGYGDKVP) is an intramembrane region (pore-forming). The Extracellular portion of the chain corresponds to 320–321 (QT). A helical membrane pass occupies residues 322–347 (WVGKTIASCFSVFAISFFALPAGILG). Residues 348-668 (SGFALKVQQK…VPQTGPDEGS (321 aa)) are Cytoplasmic-facing. Positions 369–381 (AAASLIQTAWRCY) are interaction with CALM. 2 positions are modified to phosphoserine: Ser406 and Ser408. The segment at 514–528 (KVIRRMQYFVAKKKF) is interaction with CALM; calcium-dependent. The tract at residues 534 to 571 (PYDVRDVIEQYSQGHLNLMVRIKELQRRLDQSIGKPSL) is interaction with KCNE1 C-terminus. Residues 584–620 (SNTIGARLNRVEDKVTQLDQRLVIITDMLHQLLSMQQ) adopt a coiled-coil conformation. The interaction with AKAP9 stretch occupies residues 587–615 (IGARLNRVEDKVTQLDQRLVIITDMLHQL). The segment at 588-619 (GARLNRVEDKVTQLDQRLVIITDMLHQLLSMQ) is C-terminal assembly domain (tetramerization).

Belongs to the potassium channel family. KQT (TC 1.A.1.15) subfamily. Kv7.1/KCNQ1 sub-subfamily. As to quaternary structure, tetramer. Heterotetramer with KCNE1; form the native cardiac channel I(Ks) which increases the amplitude and slows down the activation kinetics of outward potassium current and targets to the membrane raft. Interacts (via C-terminus) with CALM; forms a heterooctameric structure (with 4:4 KCNQ1:CALM stoichiometry) in a calcium-independent manner. Interacts with AKAP9; targets protein kinase A (PKA) catalytic and regulatory subunits and protein phosphatase 1 (PP1) to the KCNQ1-KCNE1 complex, allowing PKA-mediated phosphorylation and increase of delayed rectifier potassium channel activity. Interacts with KCNE2; form an heterooligomer complex that targets to the membrane raft and leading to currents with an apparently instantaneous activation, a rapid deactivation process and a linear current-voltage relationship and decreases the amplitude of the outward current. Interacts with AP2M1; mediates estrogen-induced internalization via clathrin-coated vesicles. Interacts with NEDD4L; promotes internalization and decreases I(Ks) currents. Interacts with USP2; counteracts the NEDD4L-specific down-regulation of I(Ks) and restore plasma membrane localization. Heterotetramer with KCNQ5; has a voltage-gated potassium channel activity. Interacts with KCNE3; four KCNE3 molecules are bound to one KCNQ1 tetramer (4:4 KCNQ1:KCNE3 stoichiometry); alters membrane raft localization; affects KCNQ1 structure and gating properties. Interacts with KCNE4; impairs KCNQ1 localization in lipid rafts and inhibits voltage-gated potassium channel activity. Interacts with KCNE5; impairs KCNQ1 localization in lipid rafts and only conducts current upon strong and continued depolarization. Interacts with SLC5A3; forms coregulatory channel-transporter complexes that modulate Na(+)-coupled myo-inositol influx through the transporter. Post-translationally, phosphorylation at Ser-27 by PKA; increases delayed rectifier potassium channel activity of the KCNQ1-KCNE1 complex through a macromolecular complex that includes PKA, PP1, and the targeting protein AKAP9. Ubiquitinated by NEDD4L; promotes internalization. The ubiquitinylated form is internalized through a clathrin-mediated endocytosis by interacting with AP2M1 and is recycled back to the cell membrane via RAB4A and RAB11A. In terms of processing, deubiquitinated by USP2; counteracts the NEDD4L-specific down-regulation of I(Ks) and restores the membrane localization. Expressed in heart, kidney and salivary glands. Detected in the cochlea. Almost undetectable in brain, skeletal muscle and liver. Widely expressed in embryonic and neonatal tissues. Expressed in choroid plexus epithelium (at protein level).

Its subcellular location is the cell membrane. The protein localises to the cytoplasmic vesicle membrane. It is found in the early endosome. It localises to the membrane raft. The protein resides in the endoplasmic reticulum. Its subcellular location is the basolateral cell membrane. The protein localises to the apical cell membrane. The enzyme catalyses K(+)(in) = K(+)(out). With respect to regulation, PIP2 molecule is essential to activate KCNQ channels by inducing the coupling of the voltage-sensing domain (VSD) and the pore-forming domain (PD). Upon channel activation, PIP2 disrupts the VSD-calmodulin/CALM interactions, causing the release of CALM from the VSD which triggers the opening of the gate. Calcium potentiates KCNQ1 channel current through calcium-bound CALM. Calcium-bound CALM competes with PIP2 to stabilize the channel open state. Functionally, pore-forming subunit of the voltage-gated potassium (Kv) channel involved in the regulation of cardiomyocyte excitability and important in normal development and functions of myocardium, inner ear, stomach and colon. Associates with KCNE beta subunits that modulates current kinetics. Induces a voltage-dependent by rapidly activating and slowly deactivating potassium-selective outward current. Also promotes a delayed voltage activated potassium current showing outward rectification characteristic. During beta-adrenergic receptor stimulation participates in cardiac increases the amplitude and slows down the activation kinetics of outward potassium current I(Ks). Muscarinic agonist oxotremorine-M strongly suppresses KCNQ1/KCNE1 current. When associated with KCNE3, forms the potassium channel that is important for cyclic AMP-stimulated intestinal secretion of chloride ions. This interaction with KCNE3 is reduced by 17beta-estradiol, resulting in the reduction of currents. During conditions of increased substrate load, maintains the driving force for proximal tubular and intestinal sodium ions absorption, gastric acid secretion, and cAMP-induced jejunal chloride ions secretion. Allows the provision of potassium ions to the luminal membrane of the secretory canaliculus in the resting state as well as during stimulated acid secretion. When associated with KCNE2, forms a heterooligomer complex leading to currents with an apparently instantaneous activation, a rapid deactivation process and a linear current-voltage relationship and decreases the amplitude of the outward current. When associated with KCNE4, inhibits voltage-gated potassium channel activity. When associated with KCNE5, this complex only conducts current upon strong and continued depolarization. Also forms a heterotetramer with KCNQ5; has a voltage-gated potassium channel activity. Binds with phosphatidylinositol 4,5-bisphosphate. KCNQ1-KCNE2 channel associates with Na(+)-coupled myo-inositol symporter in the apical membrane of choroid plexus epithelium and regulates the myo-inositol gradient between blood and cerebrospinal fluid with an impact on neuron excitability. This is Potassium voltage-gated channel subfamily KQT member 1 from Mus musculus (Mouse).